Here is a 334-residue protein sequence, read N- to C-terminus: Phosphoribosylformylglycinamidine cyclo-ligase (334 aa).

It belongs to the AIR synthase family.

The protein localises to the cytoplasm. It carries out the reaction 2-formamido-N(1)-(5-O-phospho-beta-D-ribosyl)acetamidine + ATP = 5-amino-1-(5-phospho-beta-D-ribosyl)imidazole + ADP + phosphate + H(+). It functions in the pathway purine metabolism; IMP biosynthesis via de novo pathway; 5-amino-1-(5-phospho-D-ribosyl)imidazole from N(2)-formyl-N(1)-(5-phospho-D-ribosyl)glycinamide: step 2/2. This chain is Phosphoribosylformylglycinamidine cyclo-ligase, found in Pyrococcus horikoshii (strain ATCC 700860 / DSM 12428 / JCM 9974 / NBRC 100139 / OT-3).